The primary structure comprises 222 residues: Dual specificity phosphatase 29 (222 aa).

One can recognise a Tyrosine-protein phosphatase domain in the interval 54-202 (HVNEVWPKLY…LRELDKQLVQ (149 aa)). A substrate-binding site is contributed by 146–153 (HCAMGRSR). Cysteine 147 serves as the catalytic Phosphocysteine intermediate. The disordered stretch occupies residues 201-222 (VQQRRGAQHRGEAGEKAGEKEP). A compositionally biased stretch (basic and acidic residues) spans 209 to 222 (HRGEAGEKAGEKEP).

The protein belongs to the protein-tyrosine phosphatase family. Non-receptor class dual specificity subfamily. In terms of assembly, homodimer. Interacts with PRKAA2.

It localises to the cytoplasm. Its subcellular location is the nucleus. It carries out the reaction O-phospho-L-tyrosyl-[protein] + H2O = L-tyrosyl-[protein] + phosphate. The catalysed reaction is O-phospho-L-seryl-[protein] + H2O = L-seryl-[protein] + phosphate. The enzyme catalyses O-phospho-L-threonyl-[protein] + H2O = L-threonyl-[protein] + phosphate. Functionally, dual specificity phosphatase able to dephosphorylate phosphotyrosine, phosphoserine and phosphothreonine residues within the same substrate, with a preference for phosphotyrosine as a substrate. Involved in the modulation of intracellular signaling cascades. In skeletal muscle regulates systemic glucose homeostasis by activating, AMPK, an energy sensor protein kinase. Affects MAP kinase signaling though modulation of the MAPK1/2 cascade in skeletal muscle promoting muscle cell differentiation, development and atrophy. This Sus scrofa (Pig) protein is Dual specificity phosphatase 29 (DUSP29).